We begin with the raw amino-acid sequence, 205 residues long: Cytochrome c biogenesis ATP-binding export protein CcmA 2 (205 aa).

Residues 2-205 (LEARDLYCER…LALTGGGAGL (204 aa)) form the ABC transporter domain. 34-41 (GGNGAGKT) serves as a coordination point for ATP.

The protein belongs to the ABC transporter superfamily. CcmA exporter (TC 3.A.1.107) family. In terms of assembly, the complex is composed of two ATP-binding proteins (CcmA) and two transmembrane proteins (CcmB).

The protein localises to the cell inner membrane. The catalysed reaction is heme b(in) + ATP + H2O = heme b(out) + ADP + phosphate + H(+). Functionally, part of the ABC transporter complex CcmAB involved in the biogenesis of c-type cytochromes; once thought to export heme, this seems not to be the case, but its exact role is uncertain. Responsible for energy coupling to the transport system. The chain is Cytochrome c biogenesis ATP-binding export protein CcmA 2 from Salmonella typhimurium (strain LT2 / SGSC1412 / ATCC 700720).